We begin with the raw amino-acid sequence, 89 residues long: MLKAQVFMFVTVLVFVCVFINSNDAKRYIEYPPWQKHPCNPRFPTPDCYKRTPANPYRRGCTCISRCRRDCGGLSTWKKLLDTILKIPV.

Residues 1–25 form the signal peptide; sequence MLKAQVFMFVTVLVFVCVFINSNDA. 2 cysteine pairs are disulfide-bonded: Cys39–Cys48 and Cys61–Cys67.

Belongs to the plant rapid alkalinization factor (RALF) family.

Its subcellular location is the secreted. Cell signaling peptide that may regulate plant stress, growth, and development. Mediates a rapid alkalinization of extracellular space by mediating a transient increase in the cytoplasmic Ca(2+) concentration leading to a calcium-dependent signaling events through a cell surface receptor and a concomitant activation of some intracellular mitogen-activated protein kinases. In Arabidopsis thaliana (Mouse-ear cress), this protein is Protein RALF-like 5 (RALFL5).